Here is a 416-residue protein sequence, read N- to C-terminus: Probable histone-binding protein lin-53 (416 aa).

WD repeat units lie at residues 118–158 (NHEG…SVPK), 170–210 (GHTK…GANG), 220–260 (GHES…PGHA), 263–303 (AHSA…LKLH), 307–347 (SHRD…EDQT), and 364–404 (GHTA…YNDV).

It belongs to the WD repeat RBAP46/RBAP48/MSI1 family. In terms of assembly, binds directly to helix 1 of the histone fold of histone H4, a region that is not accessible when H4 is in chromatin. Probable component of a NuRD-like complex, composed of at least lin-53 and hda-1. Interacts with lin-35. Interacts with hda-1; the interaction is direct. Component of the DRM complex, at least composed of lin-9, lin-35, lin-37, lin-52, lin-53, lin-54- dpl-1 and efl-1. Interacts with hcp-3.

It is found in the nucleus. The protein resides in the chromosome. Its subcellular location is the centromere. Functionally, core histone-binding subunit that may target chromatin assembly factors, chromatin remodeling factors and histone deacetylases to their histone substrates in a manner that is regulated by nucleosomal DNA. Required for hcp-3 and his-1 stabilization, localization of hcp-3 to centromeres and for proper chromosome segregation. Synthetic multivulva class B (synMuvB) protein. SynMuvB proteins are required to repress the induction of vulval development by Ras signaling and probably act by forming the multiprotein DRM complex that represses transcription. The polypeptide is Probable histone-binding protein lin-53 (Caenorhabditis briggsae).